A 110-amino-acid polypeptide reads, in one-letter code: Protein mistic (110 aa).

Residues 1–7 (MFCTFFE) lie on the Cytoplasmic side of the membrane. Residues 8–22 (KHHRKWDILLEKSTG) traverse the membrane as a helical segment. The Extracellular segment spans residues 23 to 31 (VMEAMKVTS). Residues 32–55 (EEKEQLSTAIDRMNEGLDAFIQLY) traverse the membrane as a helical segment. Residues 56–66 (NESEIDEPLIQ) lie on the Cytoplasmic side of the membrane. Residues 67 to 81 (LDDDTAELMKQARDM) traverse the membrane as a helical segment. Residues 82-88 (YGQEKLN) are Extracellular-facing. A helical transmembrane segment spans residues 89–102 (EKLNTIIKQILSIS). Over 103-110 (VSEEGEKE) the chain is Cytoplasmic.

Monomer.

Its subcellular location is the cell membrane. Functionally, chaperone that facilitates the production and integration of integral membrane proteins into the bacterial lipid bilayer. This chain is Protein mistic (mstX), found in Bacillus subtilis (strain 168).